A 336-amino-acid chain; its full sequence is Large ribosomal subunit protein uL3 (336 aa).

The segment at 1-34 (MVRHHQPRKGSVAFSPRKRAAKETPRIKSWPQND) is disordered.

The protein belongs to the universal ribosomal protein uL3 family. In terms of assembly, part of the 50S ribosomal subunit. Forms a cluster with proteins L14 and L24e.

One of the primary rRNA binding proteins, it binds directly near the 3'-end of the 23S rRNA, where it nucleates assembly of the 50S subunit. This chain is Large ribosomal subunit protein uL3, found in Methanobrevibacter smithii (strain ATCC 35061 / DSM 861 / OCM 144 / PS).